We begin with the raw amino-acid sequence, 688 residues long: Transcriptional regulatory protein GAT1 (688 aa).

Disordered stretches follow at residues 83-125, 259-278, 343-438, 482-565, and 639-678; these read NHNS…SPMI, TSAS…NNSS, FTGI…GVSC, IKKR…NLDK, and LMTM…TANN. The span at 259–271 shows a compositional bias: low complexity; that stretch reads TSASITSPTSTFS. Residues 359-368 are compositionally biased toward basic and acidic residues; it reads FDNKPKDDHF. Residues 369-379 are compositionally biased toward polar residues; it reads NTSLSVSQQQP. The segment covering 382–397 has biased composition (basic residues); it reads KKSKRKSTITKSKKKA. Residues 402–428 show a composition bias toward low complexity; sequence TTITSTGSTITTKSTNSNSTGKGTATG. The GATA-type zinc finger occupies 438–462; the sequence is CTNCGTKTTPLWRRNPQGQPLCNAC. 5 stretches are compositionally biased toward low complexity: residues 488–510, 529–543, 552–565, 639–654, and 662–678; these read GNNN…NNKS, TNNT…SKSP, FDNN…NLDK, LMTM…LSTT, and NNEG…TANN.

The protein localises to the nucleus. Functionally, transcriptional regulator of nitrogen utilization required for nitrogen catabolite repression and utilization of isoleucine, tyrosine and tryptophan as nitrogen sources. Controls expression of the MEP2 ammonium permease, the DUR1,2 urea amidolyase, and the transcription factor STP1, which in turn mediates SAP2 expression, a long-known virulence attribute of C.albicans. Influences the filamentation process depending upon the nitrogen sources available. Required for virulence in a mouse systemic infection model. The sequence is that of Transcriptional regulatory protein GAT1 (GAT1) from Candida albicans (strain SC5314 / ATCC MYA-2876) (Yeast).